Consider the following 189-residue polypeptide: GTPase NRas (189 aa).

10–17 (GAGGVGKS) contacts GTP. An Effector region motif is present at residues 32–40 (YDPTIEDSY). GTP-binding positions include 57 to 61 (DTAGQ) and 116 to 119 (NKCD). A hypervariable region region spans residues 166-185 (YRMKKLDSSEDNNQGCIRIP). Residue C181 is the site of S-palmitoyl cysteine attachment. Residue C186 is the site of S-farnesyl cysteine attachment. A propeptide spans 187-189 (KLM) (removed in mature form).

The protein belongs to the small GTPase superfamily. Ras family. Post-translationally, palmitoylated by the ZDHHC9-GOLGA7 complex. Depalmitoylated by abhd17a, abhd17b and abhd17c. A continuous cycle of de- and re-palmitoylation regulates rapid exchange between plasma membrane and Golgi.

It is found in the cell membrane. The protein resides in the golgi apparatus membrane. The enzyme catalyses GTP + H2O = GDP + phosphate + H(+). With respect to regulation, alternates between an inactive form bound to GDP and an active form bound to GTP. Activated by a guanine nucleotide-exchange factor (GEF) and inactivated by a GTPase-activating protein (GAP). In terms of biological role, ras proteins bind GDP/GTP and possess intrinsic GTPase activity. The sequence is that of GTPase NRas (nras) from Xenopus laevis (African clawed frog).